The primary structure comprises 1249 residues: AMB antimetabolite synthetase AmbB (1249 aa).

Positions phenylalanine 245–phenylalanine 633 are adenylation. A disordered region spans residues isoleucine 716–proline 735. One can recognise a Carrier domain in the interval leucine 734–alanine 809. O-(pantetheine 4'-phosphoryl)serine is present on serine 768. The interval glycine 823–glycine 1150 is condensation.

It belongs to the NRP synthetase family. It depends on pantetheine 4'-phosphate as a cofactor.

It catalyses the reaction holo-[peptidyl-carrier protein] + L-alanine + ATP = L-alanyl-[peptidyl-carrier protein] + AMP + diphosphate. Involved in the biosynthesis of the antimetabolite L-2-amino-4-methoxy-trans-3-butenoic acid (AMB), a non-proteinogenic amino acid which is toxic for prokaryotes and eukaryotes. Adenylates L-alanine and loads it onto its peptidyl carrier domain via a thioester linkage to the phosphopanthetheine moiety. In addition, loads activated L-Ala in trans onto the second carrier domain of AmbE. Can also activate L-Ser, Gly and D-Ala, albeit to a lower extent. The condensation domain of AmbB probably condenses the activated L-Ala and the L-Glu loaded on AmbE to form a L-Glu-L-Ala dipeptide at the first carrier domain of AmbE. This Pseudomonas aeruginosa (strain ATCC 15692 / DSM 22644 / CIP 104116 / JCM 14847 / LMG 12228 / 1C / PRS 101 / PAO1) protein is AMB antimetabolite synthetase AmbB.